Here is a 158-residue protein sequence, read N- to C-terminus: UPF0225 protein Pput_1155 (158 aa).

It belongs to the UPF0225 family.

This chain is UPF0225 protein Pput_1155, found in Pseudomonas putida (strain ATCC 700007 / DSM 6899 / JCM 31910 / BCRC 17059 / LMG 24140 / F1).